Reading from the N-terminus, the 269-residue chain is Protein IAL1 (269 aa).

Positions 32 to 133 (SPCAACKFLR…QDLARAKYEL (102 aa)) constitute an LOB domain.

It belongs to the LOB domain-containing protein family. In terms of tissue distribution, expressed in leaves, leaf primordia, immature ears, immature tassels, whole ovules, silk and husk leaves.

It localises to the nucleus. The chain is Protein IAL1 from Zea mays (Maize).